Here is a 327-residue protein sequence, read N- to C-terminus: Gamma-resorcylate decarboxylase (327 aa).

Positions 8 and 10 each coordinate Zn(2+). Positions 23, 164, and 287 each coordinate 2,6-dihydroxybenzoate. Positions 164 and 287 each coordinate Zn(2+). Residue Asp-287 is part of the active site.

This sequence belongs to the metallo-dependent hydrolases superfamily. ACMSD family. As to quaternary structure, homotetramer. Dimer of dimers. Zn(2+) serves as cofactor.

The catalysed reaction is 2,6-dihydroxybenzoate + H(+) = resorcinol + CO2. It carries out the reaction 2,3-dihydroxybenzoate + H(+) = catechol + CO2. It functions in the pathway aromatic compound metabolism. Inhibited by CuCl(2), monoiodoacetate and diethylpyrocarbonate. Inhibited by 2,3-dihydroxybenzaldehyde, which is an analog of the substrate 2,3-dihydroxybenzoate. Its function is as follows. Involved in the gamma-resorcylate (2,6-dihydroxybenzoate) catabolism. Catalyzes the reversible decarboxylation of gamma-resorcylate to resorcinol. The reaction is reversible, but equilibrium greatly favors the decarboxylation reaction. Also catalyzes the decarboxylation of 2,3-dihydroxybenzoate to catechol, but does not act on 2,4-dihydroxybenzoate, 2,5-dihydroxybenzoate, 3,4-dihydroxybenzoate, 3,5-dihydroxybenzoate, 2-hydroxybenzoate, or 3-hydroxybenzoate. Only resorcinol is carboxylated by the reverse reaction. The sequence is that of Gamma-resorcylate decarboxylase from Rhizobium sp. (strain MTP-10005).